The chain runs to 689 residues: MTQSQRKILVTSALPYANGPIHLGHMLEYIQTDIWSRFQKMRGHECHYICADDAHGTPIMLKAQQLGIAPEAMIAQVQIEHEQDFADFNVAFDNFHSTHSEENRELASDIYIKLRDAGHIKTKTISQLYDPEKSMFLPDRFVKGTCPKCKSDDQYGDNCDSCGATYSTTDLINPRSAVSGATPVMKDTEHFFFDLPAFEGMLKEWIHSGSLQSEMANKLNEWFEQGLQQWDISRDAPYFGFEIPDAPGKYFYVWLDAPIGYMGSFKNFCAKRGDINFDDFWAKDSTAEVYHFIGKDIVYFHSLFWPAMLEGAGLRKPTSVYAHGYVTVNGAKMSKSKGTFIKARTYLDHLDPEYLRYYYAAKLSSRIDDLDLNLEDFAQRVNSDLVGKLVNLASRTAGFISKRFDGKLANVTDNSLAESFIAKQEVIAEFYEAREYGKAMREIMAMADIANGFVAEQAPWQLVKDDDKQAQAHEVCSIALNLFRILTTYLKPVLPRLSQDVEAFMQLELTWDNLAKDMTAHEIAPFKAMMQRVDLDKVAAMVDASKDNLQPTEAPKADKKADKKVEKKATTGDPLTDDPISDEISFEDFAKLDLRIALIAKAEHVADADKLLKLQLDLGGVTKQVFAGIKSAYAPEDLEGKLTVMVANLAPRKMRFGMSEGMVLAAGPGGDELWILEPHQGAKPGMRVK.

The short motif at 15 to 25 is the 'HIGH' region element; sequence PYANGPIHLGH. Residues Cys146, Cys149, Cys159, and Cys162 each coordinate Zn(2+). The 'KMSKS' region signature appears at 332–336; sequence KMSKS. Residue Lys335 coordinates ATP. Residues 546 to 577 are disordered; that stretch reads KDNLQPTEAPKADKKADKKVEKKATTGDPLTD. Residues 555–570 are compositionally biased toward basic and acidic residues; sequence PKADKKADKKVEKKAT. The region spanning 588 to 689 is the tRNA-binding domain; sequence DFAKLDLRIA…QGAKPGMRVK (102 aa).

The protein belongs to the class-I aminoacyl-tRNA synthetase family. MetG type 1 subfamily. As to quaternary structure, homodimer. It depends on Zn(2+) as a cofactor.

The protein resides in the cytoplasm. It catalyses the reaction tRNA(Met) + L-methionine + ATP = L-methionyl-tRNA(Met) + AMP + diphosphate. Is required not only for elongation of protein synthesis but also for the initiation of all mRNA translation through initiator tRNA(fMet) aminoacylation. The polypeptide is Methionine--tRNA ligase (Shewanella denitrificans (strain OS217 / ATCC BAA-1090 / DSM 15013)).